The sequence spans 291 residues: rRNA 2'-O-methyltransferase fibrillarin (291 aa).

Basic and acidic residues-rich tracts occupy residues 1-12 (MKKTNKRPDGRK) and 20-29 (FRSDKGEGRG). The interval 1–45 (MKKTNKRPDGRKFQKGGKPFRSDKGEGRGRMNNKKKGSVNAGLDR) is disordered. Asymmetric dimethylarginine occurs at positions 28 and 62. Residues 134-135 (TT), 153-154 (EF), 178-179 (DA), and 198-201 (DVSQ) each bind S-adenosyl-L-methionine.

Belongs to the methyltransferase superfamily. Fibrillarin family. In terms of assembly, component of box C/D small nucleolar ribonucleoprotein (snoRNP) particles.

The protein localises to the nucleus. Its subcellular location is the nucleolus. It catalyses the reaction L-glutaminyl-[histone H2A] + S-adenosyl-L-methionine = N(5)-methyl-L-glutaminyl-[histone H2A] + S-adenosyl-L-homocysteine + H(+). Functionally, S-adenosyl-L-methionine-dependent methyltransferase that has the ability to methylate both RNAs and proteins. Involved in pre-rRNA processing. Utilizes the methyl donor S-adenosyl-L-methionine to catalyze the site-specific 2'-hydroxyl methylation of ribose moieties in pre-ribosomal RNA. Site specificity is provided by a guide RNA that base pairs with the substrate. Methylation occurs at a characteristic distance from the sequence involved in base pairing with the guide RNA. Also acts as a protein methyltransferase by mediating methylation of 'Gln-105' of histone H2A (H2AQ105me), a modification that impairs binding of the FACT complex and is specifically present at 35S ribosomal DNA locus. The polypeptide is rRNA 2'-O-methyltransferase fibrillarin (NOP1) (Encephalitozoon cuniculi (strain GB-M1) (Microsporidian parasite)).